A 105-amino-acid polypeptide reads, in one-letter code: Late embryogenesis abundant protein Lea5-A (105 aa).

It belongs to the LEA type 3 family.

The protein is Late embryogenesis abundant protein Lea5-A (LEA5-A) of Gossypium hirsutum (Upland cotton).